A 672-amino-acid chain; its full sequence is UvrABC system protein B (672 aa).

The region spanning 26–181 (AGLEDGLAYQ…ILQRLAELQY (156 aa)) is the Helicase ATP-binding domain. An ATP-binding site is contributed by 39–46 (GVTGSGKT). The short motif at 92 to 115 (YYDYYQPEAYVPSSDTYIEKDASI) is the Beta-hairpin element. One can recognise a Helicase C-terminal domain in the interval 430–592 (QVDDLLSEIK…ITPKSIQKAV (163 aa)). In terms of domain architecture, UVR spans 631 to 666 (AKELRKLEEQMYHHARNLEFEEAAAVRDKIQHIRKG).

It belongs to the UvrB family. In terms of assembly, forms a heterotetramer with UvrA during the search for lesions. Interacts with UvrC in an incision complex.

The protein resides in the cytoplasm. In terms of biological role, the UvrABC repair system catalyzes the recognition and processing of DNA lesions. A damage recognition complex composed of 2 UvrA and 2 UvrB subunits scans DNA for abnormalities. Upon binding of the UvrA(2)B(2) complex to a putative damaged site, the DNA wraps around one UvrB monomer. DNA wrap is dependent on ATP binding by UvrB and probably causes local melting of the DNA helix, facilitating insertion of UvrB beta-hairpin between the DNA strands. Then UvrB probes one DNA strand for the presence of a lesion. If a lesion is found the UvrA subunits dissociate and the UvrB-DNA preincision complex is formed. This complex is subsequently bound by UvrC and the second UvrB is released. If no lesion is found, the DNA wraps around the other UvrB subunit that will check the other stand for damage. The protein is UvrABC system protein B of Coxiella burnetii (strain Dugway 5J108-111).